The chain runs to 428 residues: Putative zinc metalloprotease LL2128 (428 aa).

Histidine 19 contacts Zn(2+). Residue glutamate 20 is part of the active site. Histidine 23 is a Zn(2+) binding site. Helical transmembrane passes span 188–210 (GPLNNFILGIIAFIVLTFVQGGV), 354–376 (IVYLLAMLSINLGIVNLFPIPVL), and 401–423 (IITMVGVVFMLVLFVAVTWNDIL). A PDZ domain is found at 188-282 (GPLNNFILGI…SETLSVTPKK (95 aa)).

This sequence belongs to the peptidase M50B family. Requires Zn(2+) as cofactor.

The protein resides in the cell membrane. The polypeptide is Putative zinc metalloprotease LL2128 (Lactococcus lactis subsp. lactis (strain IL1403) (Streptococcus lactis)).